A 412-amino-acid polypeptide reads, in one-letter code: MILASVLRSGPGGGLPLRPLLGPALALRARSTSATDTHHVEMARERSKTVTSFYNQSAIDAAAEKPSVRLTPTMMLYAGRSQDGSHLLKSARYLQQELPVRIAHRIKGFRCLPFIIGCNPTILHVHELYIRAFQKLTDFPPIKDQADEAQYCQLVRQLLDDHKDVVTLLAEGLRESRKHIEDEKLVRYFLDKTLTSRLGIRMLATHHLALHEDKPDFVGIICTRLSPKKIIEKWVDFARRLCEHKYGNAPRVRINGHVAARFPFIPMPLDYILPELLKNAMRATMESHLDTPYNVPDVVITIANNDVDLIIRISDRGGGIAHKDLDRVMDYHFTTAEASTQDPRISPLFGHLDMHSGAQSGPMHGFGFGLPTSRAYAEYLGGSLQLQSLQGIGTDVYLRLRHIDGREESFRI.

The transit peptide at 1-30 (MILASVLRSGPGGGLPLRPLLGPALALRAR) directs the protein to the mitochondrion. Residue S31 is modified to Phosphoserine. S52 carries the phosphoserine; by autocatalysis modification. One can recognise a Histidine kinase domain in the interval 159-404 (LDDHKDVVTL…DVYLRLRHID (246 aa)). N6-acetyllysine is present on residues K192 and K233. ATP is bound by residues N279 and D315. Mg(2+) is bound at residue N279. Residues V328, D330, and F333 each coordinate K(+). ATP contacts are provided by T334 and T335. Residues S356 and S360 each carry the phosphoserine modification. 3 residues coordinate ATP: H364, G367, and L370. K(+) is bound at residue G367.

It belongs to the PDK/BCKDK protein kinase family. As to quaternary structure, homodimer. Homotetramer. Dimerizes through interaction of two opposing nucleotide-binding domains. Interacts with E2 component of the branched-chain alpha-ketoacid dehydrogenase (BCKDH) complex. Competes with BCKDK for binding to the E2 component; this interaction is modulated by branched-chain alpha-keto acids. At steady state, BCKDH holoenzyme contains BCKDK and BCKDHA is phosphorylated. In response to high levels of branched-chain alpha-keto acids, the inhibitory BCKDK is replaced by activating PPM1K leading to BCKDHA dephosphorylation and BCAA degradation. In terms of processing, autophosphorylated. In terms of tissue distribution, ubiquitous.

It localises to the mitochondrion matrix. It carries out the reaction L-seryl-[3-methyl-2-oxobutanoate dehydrogenase] + ATP = O-phospho-L-seryl-[3-methyl-2-oxobutanoate dehydrogenase] + ADP + H(+). The enzyme catalyses L-seryl-[protein] + ATP = O-phospho-L-seryl-[protein] + ADP + H(+). The protein operates within protein modification. With respect to regulation, allosterically inhibited by certain thiazoles and thiophenes: thiazoles increase interaction with DBT/BCKDH-E2, whereas thiophenes reduce this interaction. Inhibited by 3,6- dichlorobenzo[b]thiophene-2-carboxylic acid (BT2). The ATP binding is mediated by both potassium and magnesium ions. Its function is as follows. Serine/threonine-protein kinase component of macronutrients metabolism. Forms a functional kinase and phosphatase pair with PPM1K, serving as a metabolic regulatory node that coordinates branched-chain amino acids (BCAAs) with glucose and lipid metabolism via two distinct phosphoprotein targets: mitochondrial BCKDHA subunit of the branched-chain alpha-ketoacid dehydrogenase (BCKDH) complex and cytosolic ACLY, a lipogenic enzyme of Krebs cycle. Phosphorylates and inactivates mitochondrial BCKDH complex a multisubunit complex consisting of three multimeric components each involved in different steps of BCAA catabolism: E1 composed of BCKDHA and BCKDHB, E2 core composed of DBT monomers, and E3 composed of DLD monomers. Associates with the E2 component of BCKDH complex and phosphorylates BCKDHA on Ser-337, leading to conformational changes that interrupt substrate channeling between E1 and E2 and inactivates the BCKDH complex. Phosphorylates ACLY on Ser-455 in response to changes in cellular carbohydrate abundance such as occurs during fasting to feeding metabolic transition. Refeeding stimulates MLXIPL/ChREBP transcription factor, leading to increased BCKDK to PPM1K expression ratio, phosphorylation and activation of ACLY that ultimately results in the generation of malonyl-CoA and oxaloacetate immediate substrates of de novo lipogenesis and glucogenesis, respectively. Recognizes phosphosites having SxxE/D canonical motif. The protein is Branched-chain alpha-ketoacid dehydrogenase kinase of Homo sapiens (Human).